A 557-amino-acid polypeptide reads, in one-letter code: Formate--tetrahydrofolate ligase (557 aa).

65–72 (TPAGEGKT) provides a ligand contact to ATP.

This sequence belongs to the formate--tetrahydrofolate ligase family.

The catalysed reaction is (6S)-5,6,7,8-tetrahydrofolate + formate + ATP = (6R)-10-formyltetrahydrofolate + ADP + phosphate. Its pathway is one-carbon metabolism; tetrahydrofolate interconversion. The protein is Formate--tetrahydrofolate ligase of Methylobacterium radiotolerans (strain ATCC 27329 / DSM 1819 / JCM 2831 / NBRC 15690 / NCIMB 10815 / 0-1).